Consider the following 208-residue polypeptide: Non-specific lipid transfer protein GPI-anchored 4 (208 aa).

A signal peptide spans 1-25 (MKQSLLLSFVLLLLSSSSLVTPIHA). 3 N-linked (GlcNAc...) asparagine glycosylation sites follow: N27, N67, and N105. 4 cysteine pairs are disulfide-bonded: C48/C91, C58/C75, C76/C116, and C89/C125. The interval 136–181 (GASPVSPSAGAPTTSPSAAKSPETSATSPSSDETPSMTAPSPSSSG) is disordered. A lipid anchor (GPI-anchor amidated serine) is attached at S179. A propeptide spans 180 to 208 (SGTNILSVPALTIVFVIVSSVAYISAFSN) (removed in mature form).

This sequence belongs to the plant LTP family. Confined to the anthers and stamen of the inflorescence, especially in pollen.

It localises to the cell membrane. Functionally, lipid transfer protein involved in seed and ovule maturation and development, probably by regulating the fatty acids homeostasis during suberin and sporopollenin biosynthesis or deposition. This is Non-specific lipid transfer protein GPI-anchored 4 from Arabidopsis thaliana (Mouse-ear cress).